We begin with the raw amino-acid sequence, 491 residues long: D-xylose-proton symporter (491 aa).

Residues 1 to 9 (MNTQYNSSY) are Cytoplasmic-facing. Residues 10–30 (IFSITLVATLGGLLFGYDTAV) form a helical membrane-spanning segment. The Periplasmic portion of the chain corresponds to 31-55 (ISGTVESLNTVFVAPQNLSESAANS). The helical transmembrane segment at 56-76 (LLGFCVASALIGCIIGGALGG) threads the bilayer. At 77-89 (YCSNRFGRRDSLK) the chain is on the cytoplasmic side. Residues 90 to 110 (IAAVLFFISGVGSAWPELGFT) traverse the membrane as a helical segment. The Periplasmic segment spans residues 111–133 (SINPDNTVPVYLAGYVPEFVIYR). The helical transmembrane segment at 134-154 (IIGGIGVGLASMLSPMYIAEL) threads the bilayer. Over 155–165 (APAHIRGKLVS) the chain is Cytoplasmic. A helical transmembrane segment spans residues 166–186 (FNQFAIIFGQLLVYCVNYFIA). Gln168 serves as a coordination point for beta-D-xylose. At 187 to 200 (RSGDASWLNTDGWR) the chain is on the periplasmic side. Residues 201 to 221 (YMFASECIPALLFLMLLYTVP) traverse the membrane as a helical segment. Topologically, residues 222–272 (ESPRWLMSRGKQEQAEGILRKIMGNTLATQAVQEIKHSLDHGRKTGGRLLM) are cytoplasmic. The chain crosses the membrane as a helical span at residues 273–293 (FGVGVIVIGVMLSIFQQFVGI). Residues 288 to 289 (QQ) and Asn294 contribute to the beta-D-xylose site. Residues 294 to 312 (NVVLYYAPEVFKTLGASTD) lie on the Periplasmic side of the membrane. Residues 313–333 (IALLQTIIVGVINLTFTVLAI) form a helical membrane-spanning segment. The Cytoplasmic portion of the chain corresponds to 334 to 343 (MTVDKFGRKP). A helical membrane pass occupies residues 344–364 (LQIIGALGMAIGMFSLGTAFY). Topologically, residues 365-369 (TQAPG) are periplasmic. The chain crosses the membrane as a helical span at residues 370-390 (IVALLSMLFYVAAFAMSWGPV). At 391-407 (CWVLLSEIFPNAIRGKA) the chain is on the cytoplasmic side. Beta-D-xylose-binding residues include Trp392 and Gln415. A helical membrane pass occupies residues 408–428 (LAIAVAAQWLANYFVSWTFPM). Over 429-442 (MDKNSWLVAHFHNG) the chain is Periplasmic. The chain crosses the membrane as a helical span at residues 443–463 (FSYWIYGCMGVLAALFMWKFV). At 464–491 (PETKGKTLEELEALWEPETKKTQQTATL) the chain is on the cytoplasmic side.

The protein belongs to the major facilitator superfamily. Sugar transporter (TC 2.A.1.1) family.

The protein localises to the cell inner membrane. The catalysed reaction is D-xylose(in) + H(+)(in) = D-xylose(out) + H(+)(out). Uptake of D-xylose across the boundary membrane with the concomitant transport of protons into the cell (symport system). The chain is D-xylose-proton symporter (xylE) from Escherichia coli O157:H7.